The sequence spans 1375 residues: DNA-directed RNA polymerase subunit beta' (1375 aa).

A unknown region spans residues 1–158 (MAKNEVLSLP…RVNKIIQPIR (158 aa)). A DNA-directed RNA polymerase subunit beta' region spans residues 159-1353 (KTYGSKAFTH…GGLIPAGTGI (1195 aa)). 4 residues coordinate Zn(2+): Cys-219, Cys-221, Cys-233, and Cys-236. Positions 607, 609, and 611 each coordinate Mg(2+).

This sequence belongs to the RNA polymerase beta' chain family. In terms of assembly, the RNAP catalytic core consists of 2 alpha, 1 beta, 1 beta' and 1 omega subunit. When a sigma factor is associated with the core the holoenzyme is formed, which can initiate transcription. Requires Mg(2+) as cofactor. Zn(2+) is required as a cofactor.

The catalysed reaction is RNA(n) + a ribonucleoside 5'-triphosphate = RNA(n+1) + diphosphate. Its function is as follows. DNA-dependent RNA polymerase catalyzes the transcription of DNA into RNA using the four ribonucleoside triphosphates as substrates. The chain is DNA-directed RNA polymerase subunit beta' from Acholeplasma laidlawii (strain PG-8A).